Reading from the N-terminus, the 449-residue chain is Na(+)-translocating NADH-quinone reductase subunit A (449 aa).

It belongs to the NqrA family. Composed of six subunits; NqrA, NqrB, NqrC, NqrD, NqrE and NqrF.

The enzyme catalyses a ubiquinone + n Na(+)(in) + NADH + H(+) = a ubiquinol + n Na(+)(out) + NAD(+). Its function is as follows. NQR complex catalyzes the reduction of ubiquinone-1 to ubiquinol by two successive reactions, coupled with the transport of Na(+) ions from the cytoplasm to the periplasm. NqrA to NqrE are probably involved in the second step, the conversion of ubisemiquinone to ubiquinol. This Actinobacillus pleuropneumoniae serotype 3 (strain JL03) protein is Na(+)-translocating NADH-quinone reductase subunit A.